Reading from the N-terminus, the 352-residue chain is UDP-N-acetylglucosamine--N-acetylmuramyl-(pentapeptide) pyrophosphoryl-undecaprenol N-acetylglucosamine transferase 2 (352 aa).

UDP-N-acetyl-alpha-D-glucosamine is bound by residues 11 to 13 (SAG), R164, S194, and Q289.

This sequence belongs to the glycosyltransferase 28 family. MurG subfamily.

The protein localises to the cell membrane. It catalyses the reaction di-trans,octa-cis-undecaprenyl diphospho-N-acetyl-alpha-D-muramoyl-L-alanyl-D-glutamyl-meso-2,6-diaminopimeloyl-D-alanyl-D-alanine + UDP-N-acetyl-alpha-D-glucosamine = di-trans,octa-cis-undecaprenyl diphospho-[N-acetyl-alpha-D-glucosaminyl-(1-&gt;4)]-N-acetyl-alpha-D-muramoyl-L-alanyl-D-glutamyl-meso-2,6-diaminopimeloyl-D-alanyl-D-alanine + UDP + H(+). It functions in the pathway cell wall biogenesis; peptidoglycan biosynthesis. In terms of biological role, cell wall formation. Catalyzes the transfer of a GlcNAc subunit on undecaprenyl-pyrophosphoryl-MurNAc-pentapeptide (lipid intermediate I) to form undecaprenyl-pyrophosphoryl-MurNAc-(pentapeptide)GlcNAc (lipid intermediate II). The chain is UDP-N-acetylglucosamine--N-acetylmuramyl-(pentapeptide) pyrophosphoryl-undecaprenol N-acetylglucosamine transferase 2 from Bacillus cereus (strain ATCC 14579 / DSM 31 / CCUG 7414 / JCM 2152 / NBRC 15305 / NCIMB 9373 / NCTC 2599 / NRRL B-3711).